The sequence spans 309 residues: Spermatid maturation protein 1 (309 aa).

The helical transmembrane segment at 29 to 49 (VLLLLGLIICINISINIVTLL) threads the bilayer. The interval 209–231 (PPPPSPEAPSHKNGGEGAVPEAE) is disordered. Positions 259–285 (RIVYDARDMRRRLRELTREVEALSGCY) form a coiled coil.

The protein localises to the membrane. It is found in the cytoplasm. Required for proper cytoplasm removal during spermatogenesis. The polypeptide is Spermatid maturation protein 1 (SPEM1) (Homo sapiens (Human)).